The primary structure comprises 269 residues: MPGVETIKSSWADEVELDYGGLPPTTETVENGQKYVTEYKYNKDDKKTKVVRTYKISKQVVPKTVAKRRTWTKFGESKNDKPGPNSQTTMVSEEIFMQFLNSKEDEKANDPLLDPTKNIAKCRICNGEHWSVNCPYKGTAMDTNMMEKKASAAAAAAVDAPKSGKYVPPFLKDSQKGALGMRGRDDTAAIRISNLSESMTEADLEELVKKIGPQSKMYLARDKNTGLCKGFAYVHFKQRKDAAAAIEILNGHGYDHLILSVEWSKPQNN.

In terms of domain architecture, RRM spans 188–266; sequence AAIRISNLSE…LILSVEWSKP (79 aa).

It belongs to the eIF-3 subunit G family. As to quaternary structure, component of the eukaryotic translation initiation factor 3 (eIF-3) complex. The eIF-3 complex interacts with pix.

It localises to the cytoplasm. In terms of biological role, RNA-binding component of the eukaryotic translation initiation factor 3 (eIF-3) complex, which is involved in protein synthesis of a specialized repertoire of mRNAs and, together with other initiation factors, stimulates binding of mRNA and methionyl-tRNAi to the 40S ribosome. The eIF-3 complex specifically targets and initiates translation of a subset of mRNAs involved in cell proliferation. This subunit can bind 18S rRNA. This is Eukaryotic translation initiation factor 3 subunit G-1 from Drosophila sechellia (Fruit fly).